A 185-amino-acid chain; its full sequence is MEPPQCVEELEDDVFQPEDGEPGTQPGSLLSADLFAQSQLDCPLSRLQLFPLTHCCGPGLRPVSQEDKATQTLSPASPSQGVMLPCGVTEEPQRLFYGNAGYRLPLPASFPAGSALGEQPPEGQFLQHRAEVQIARKLQCIADQFHRLHMQQHQQNRDRAWRQVFLFLQNLALNRRENREGVGPW.

The tract at residues 1–28 is disordered; sequence MEPPQCVEELEDDVFQPEDGEPGTQPGS. Acidic residues predominate over residues 8–21; the sequence is EELEDDVFQPEDGE. Residues 67–75 are interaction with DLC2; sequence DKATQTLSP. The BH3 motif lies at 134–148; that stretch reads IARKLQCIADQFHRL.

This sequence belongs to the Bcl-2 family. Interacts with MCL1, BCL2, BCL2L1/BCL-Xl, BCL2A1 and BCL2L2/BCL-w. Interacts with the myosin V actin motor complex through its binding to DLC2.

Its function is as follows. May play a role in apoptosis. This is Bcl-2-modifying factor (Bmf) from Rattus norvegicus (Rat).